Consider the following 125-residue polypeptide: Prefoldin subunit beta (125 aa).

It belongs to the prefoldin subunit beta family. Heterohexamer of two alpha and four beta subunits.

It localises to the cytoplasm. Molecular chaperone capable of stabilizing a range of proteins. Seems to fulfill an ATP-independent, HSP70-like function in archaeal de novo protein folding. In Sulfurisphaera tokodaii (strain DSM 16993 / JCM 10545 / NBRC 100140 / 7) (Sulfolobus tokodaii), this protein is Prefoldin subunit beta (pfdB).